The sequence spans 48 residues: Glycine-rich RNA-binding protein 2 (48 aa).

The protein is Glycine-rich RNA-binding protein 2 of Populus euphratica (Euphrates poplar).